Consider the following 320-residue polypeptide: Iminosuccinate reductase (320 aa).

The active-site Proton donor/acceptor is the Lys67. NAD(+) is bound by residues Arg110, His137–Gln138, Asn159, Ser199, Met219–Asp222, Lys226, and Gly291.

Belongs to the ornithine cyclodeaminase/mu-crystallin family. BhcD subfamily.

The catalysed reaction is L-aspartate + NAD(+) = iminosuccinate + NADH + H(+). Imine reductase that catalyzes the NADH-dependent reduction of iminosuccinate to L-aspartate. Is essential for the growth of P.denitrificans in the presence of glycolate and glyoxylate since it functions in glyoxylate assimilation via the beta-hydroxyaspartate cycle (BHAC). Thereby BhcD regenerates the amino group donor for the first step of the BHAC. This chain is Iminosuccinate reductase, found in Paracoccus denitrificans (strain Pd 1222).